A 312-amino-acid chain; its full sequence is MIEFEKPRIEKIDENRDYGKFVVEPLERGYGTTLGNSLRRILLSSLPGAAITNIQIDGVLHEFSTIPGVREDVTQIILNIKGLALKLYAEEEKTLEIDITGPATVTAGDIIVDSDVEILNKDLVICSVAEGATFHARLTVKPGRGYVQADENKKEDMPIGVLPVDSIYTPVLRVNYQVENTRVGRRDDFDKLTMEIWTDGSIIPQEALSLAAKIMTEHLDIFVNLTDEAKNAEIMVEKEETQKEKMLEMTIEELDLSVRSYNCLKRAGINTVQELTNKSEPEMIKVRNLGRKSLEEVKLKLHDLGLGLRKDD.

Positions 1–226 are alpha N-terminal domain (alpha-NTD); it reads MIEFEKPRIE…EHLDIFVNLT (226 aa). An alpha C-terminal domain (alpha-CTD) region spans residues 243–312; the sequence is KEKMLEMTIE…DLGLGLRKDD (70 aa).

This sequence belongs to the RNA polymerase alpha chain family. As to quaternary structure, homodimer. The RNAP catalytic core consists of 2 alpha, 1 beta, 1 beta' and 1 omega subunit. When a sigma factor is associated with the core the holoenzyme is formed, which can initiate transcription.

It carries out the reaction RNA(n) + a ribonucleoside 5'-triphosphate = RNA(n+1) + diphosphate. In terms of biological role, DNA-dependent RNA polymerase catalyzes the transcription of DNA into RNA using the four ribonucleoside triphosphates as substrates. The polypeptide is DNA-directed RNA polymerase subunit alpha (Enterococcus faecalis (strain ATCC 700802 / V583)).